Consider the following 645-residue polypeptide: COP9 signalosome complex subunit 10 (645 aa).

Over residues 1–45 (MSDEDNNYDDFMLSDDEGMESIEMEEETDDEDKQNIEINEDNSQD) the composition is skewed to acidic residues. The segment at 1–63 (MSDEDNNYDD…HKQHEQGTFE (63 aa)) is disordered. Residues 46–63 (DQDRGAARHKQHEQGTFE) are compositionally biased toward basic and acidic residues. The 196-residue stretch at 348–543 (DLSFALMRYY…DLVYFGDENK (196 aa)) folds into the PCI domain.

As to quaternary structure, component of a COP9 signalosome-like (CSN) complex, composed of at least RRI1/CSN5, CSN9, RRI2/CSN10, PCI8/CSN11, CSN12 and CSI1. In the complex, it probably interacts directly with CSN12.

It localises to the cytoplasm. Its subcellular location is the nucleus. Functionally, component of the COP9 signalosome (CSN) complex that acts as an regulator of the ubiquitin (Ubl) conjugation pathway by mediating the deneddylation of the cullin subunit of SCF-type E3 ubiquitin-protein ligase complexes. The CSN complex is involved in the regulation of the mating pheromone response. The chain is COP9 signalosome complex subunit 10 (RRI2) from Saccharomyces cerevisiae (strain ATCC 204508 / S288c) (Baker's yeast).